The following is a 103-amino-acid chain: Large ribosomal subunit protein bL21 (103 aa).

Belongs to the bacterial ribosomal protein bL21 family. Part of the 50S ribosomal subunit. Contacts protein L20.

Its function is as follows. This protein binds to 23S rRNA in the presence of protein L20. This Mycolicibacterium smegmatis (strain ATCC 700084 / mc(2)155) (Mycobacterium smegmatis) protein is Large ribosomal subunit protein bL21.